A 661-amino-acid polypeptide reads, in one-letter code: UvrABC system protein B (661 aa).

One can recognise a Helicase ATP-binding domain in the interval 24–209; sequence NGLNKGYRFQ…IFPSYQDEGI (186 aa). An ATP-binding site is contributed by 37-44; sequence GVTGSGKT. Positions 90-113 match the Beta-hairpin motif; sequence YYDYYQPEAYVPTKDLYIEKSADI. A Helicase C-terminal domain is found at 430 to 594; that stretch reads DLVNEIVQVK…IIKPLMEDIF (165 aa). The UVR domain maps to 622 to 657; it reads EEYAALLEEEMYKAASELRYEDAARLRDELFKIKEE.

Belongs to the UvrB family. Forms a heterotetramer with UvrA during the search for lesions. Interacts with UvrC in an incision complex.

It localises to the cytoplasm. Its function is as follows. The UvrABC repair system catalyzes the recognition and processing of DNA lesions. A damage recognition complex composed of 2 UvrA and 2 UvrB subunits scans DNA for abnormalities. Upon binding of the UvrA(2)B(2) complex to a putative damaged site, the DNA wraps around one UvrB monomer. DNA wrap is dependent on ATP binding by UvrB and probably causes local melting of the DNA helix, facilitating insertion of UvrB beta-hairpin between the DNA strands. Then UvrB probes one DNA strand for the presence of a lesion. If a lesion is found the UvrA subunits dissociate and the UvrB-DNA preincision complex is formed. This complex is subsequently bound by UvrC and the second UvrB is released. If no lesion is found, the DNA wraps around the other UvrB subunit that will check the other stand for damage. The polypeptide is UvrABC system protein B (Fervidobacterium nodosum (strain ATCC 35602 / DSM 5306 / Rt17-B1)).